The sequence spans 484 residues: Cobyric acid synthase (484 aa).

In terms of domain architecture, GATase cobBQ-type spans 249–438; that stretch reads QLRVAVPVFT…LHGIFDRPET (190 aa). The active-site Nucleophile is C330. Residue H430 is part of the active site.

The protein belongs to the CobB/CobQ family. CobQ subfamily.

Its pathway is cofactor biosynthesis; adenosylcobalamin biosynthesis. Its function is as follows. Catalyzes amidations at positions B, D, E, and G on adenosylcobyrinic A,C-diamide. NH(2) groups are provided by glutamine, and one molecule of ATP is hydrogenolyzed for each amidation. This is Cobyric acid synthase from Vibrio cholerae serotype O1 (strain ATCC 39315 / El Tor Inaba N16961).